Consider the following 398-residue polypeptide: Phosphoglycerate kinase (398 aa).

Substrate contacts are provided by residues 21–23, Arg-36, 59–62, Arg-119, and Arg-157; these read DFN and HLGR. ATP is bound by residues Lys-208, Gly-296, Glu-327, and 354-357; that span reads GGDS.

The protein belongs to the phosphoglycerate kinase family. In terms of assembly, monomer.

Its subcellular location is the cytoplasm. It carries out the reaction (2R)-3-phosphoglycerate + ATP = (2R)-3-phospho-glyceroyl phosphate + ADP. It functions in the pathway carbohydrate degradation; glycolysis; pyruvate from D-glyceraldehyde 3-phosphate: step 2/5. The sequence is that of Phosphoglycerate kinase from Streptococcus equi subsp. zooepidemicus (strain H70).